We begin with the raw amino-acid sequence, 1398 residues long: DNA-directed RNA polymerase subunit beta' (1398 aa).

Positions 73, 75, 88, and 91 each coordinate Zn(2+). Residues Asp464, Asp466, and Asp468 each contribute to the Mg(2+) site. Positions 823, 897, 904, and 907 each coordinate Zn(2+).

It belongs to the RNA polymerase beta' chain family. As to quaternary structure, the RNAP catalytic core consists of 2 alpha, 1 beta, 1 beta' and 1 omega subunit. When a sigma factor is associated with the core the holoenzyme is formed, which can initiate transcription. It depends on Mg(2+) as a cofactor. Zn(2+) serves as cofactor.

It carries out the reaction RNA(n) + a ribonucleoside 5'-triphosphate = RNA(n+1) + diphosphate. Its function is as follows. DNA-dependent RNA polymerase catalyzes the transcription of DNA into RNA using the four ribonucleoside triphosphates as substrates. In Gluconacetobacter diazotrophicus (strain ATCC 49037 / DSM 5601 / CCUG 37298 / CIP 103539 / LMG 7603 / PAl5), this protein is DNA-directed RNA polymerase subunit beta'.